A 151-amino-acid chain; its full sequence is Large ribosomal subunit protein bL9 (151 aa).

This sequence belongs to the bacterial ribosomal protein bL9 family.

Its function is as follows. Binds to the 23S rRNA. The sequence is that of Large ribosomal subunit protein bL9 from Francisella tularensis subsp. novicida (strain U112).